The primary structure comprises 153 residues: Cyanate hydratase (153 aa).

Residues Arg-88, Glu-91, and Ser-114 contribute to the active site.

Belongs to the cyanase family.

The catalysed reaction is cyanate + hydrogencarbonate + 3 H(+) = NH4(+) + 2 CO2. Its function is as follows. Catalyzes the reaction of cyanate with bicarbonate to produce ammonia and carbon dioxide. In Mycolicibacterium vanbaalenii (strain DSM 7251 / JCM 13017 / BCRC 16820 / KCTC 9966 / NRRL B-24157 / PYR-1) (Mycobacterium vanbaalenii), this protein is Cyanate hydratase.